The following is a 1117-amino-acid chain: MNALQQKCRPKHQVLVLKCYPRTAKGAVDVKPNSSELSYLLYYATSRRSKIQKIGAFLEKKTASDVWRLRIGNVQVTLQILSALMEKLHKDSVLIAPFVLKILDTVLRSDDITMIESSLPTFGAFCDYHDAAFLLADQTYLRQYEEIVRLYAQLASTAAPGRESLTTPVKVRWRNAGLEAIRSVSTADALSSITGSQMHVIMPRILENLWSDTPDFLEILHQRLEEEEKVDTEKQLRRRTSIATVGTDGANDPNPVALSGTAGDVDKLAEEEVGVLAMQCLKSIFIVPTRAQIHGATVSLLKFIQEKVAQGNSVVELHDDRERDNGWAISIYGIIARWAPVQDRYTILVAALETLLRIPAQDATLDEQLALVTIMSSLLRSDVNLIGLSMMDVLLGLIKQMRKLFRLRSPASRSDDGNVATAESDTAVRQKNKHLVGRLELCIGDLATHVYYADQIADMVSAIILRLKPSRASSINSSPGGEKNGNEAGPGASTVELSESQQFDHYFCISTGRASGLRAIKEILLVANPQKKLTGNLAMSRNPVPIHVWEGTHWLLRDPDGHVRKAYMEAIVTWLDRETSFASEIAVEEKLPRSRSSIKMSKEASSGINRRAVSNASHRERGSKPRPSQFLALLHLVIYDNALQYVDFETDLVLLHILLTRLVLQLGVNAARYGLPMIYRLQEDVQEIETPLHKVRIAALCHGYFWALSEKFDFKESDIGQAIESEVARRKRKAFWVQGINMPPPSLDQVGIPGEALPQPDWDSASLEREELLPFDDREALVESVVARYHESLQAPPGSPGSPGRNPSGPILGSSLTSTGQADSDVELPVVFREHMLGDWSRDAAAAMLAAAGKSESLTGSKTETTGTRGHLTVKTNGMNGNGLTNGHGPTSPYGSQYNLMRPHSSHGHREKEREGTIPRHRKGSVRSAHSPAALSTGNRGTVASVDQLKLVLSGNPPPKTAGLAGDDDSGDSMVSYDYSLSDMSFNPATQNDQPGSPTSVKRPGTSSKRGPLNTHPPLGGAPNLHEEQNGDGSVPPVPPMPDMNMLGGKRSPIQAMENSFQEKGRRRSLNSRNGDGMRPKSVRSQETKTMDLQDLLRGIDSRPSEGSLGNVTRPPY.

Disordered stretches follow at residues 473–494, 601–625, 792–822, and 853–1117; these read SSINSSPGGEKNGNEAGPGAST, SKEASSGINRRAVSNASHRERGSKP, SLQAPPGSPGSPGRNPSGPILGSSLTSTGQA, and GKSE…RPPY. Over residues 601-616 the composition is skewed to polar residues; sequence SKEASSGINRRAVSNA. The segment covering 856-868 has biased composition (polar residues); it reads ESLTGSKTETTGT. Over residues 908 to 918 the composition is skewed to basic and acidic residues; sequence GHREKEREGTI. The segment covering 982–1009 has biased composition (polar residues); sequence SDMSFNPATQNDQPGSPTSVKRPGTSSK. Residues 1076–1092 are compositionally biased toward basic and acidic residues; the sequence is DGMRPKSVRSQETKTMD.

This sequence belongs to the EFR3 family.

This chain is Protein EFR3 (EFR3), found in Gibberella zeae (strain ATCC MYA-4620 / CBS 123657 / FGSC 9075 / NRRL 31084 / PH-1) (Wheat head blight fungus).